Reading from the N-terminus, the 115-residue chain is Mediator of RNA polymerase II transcription subunit 9 (115 aa).

The interval 1 to 31 (MATGGTVRPAEEPEEEEEEEDEAVEEEEEED) is disordered. Residues 12 to 31 (EPEEEEEEEDEAVEEEEEED) are compositionally biased toward acidic residues. The stretch at 31–107 (DYTFLPLVHD…SELLQKYKSL (77 aa)) forms a coiled coil.

It belongs to the Mediator complex subunit 9 family. In terms of assembly, component of the Mediator complex.

Its subcellular location is the nucleus. Functionally, component of the Mediator complex, a coactivator involved in the regulated transcription of nearly all RNA polymerase II-dependent genes. Mediator functions as a bridge to convey information from gene-specific regulatory proteins to the basal RNA polymerase II transcription machinery. Mediator is recruited to promoters by direct interactions with regulatory proteins and serves as a scaffold for the assembly of a functional preinitiation complex with RNA polymerase II and the general transcription factors. The polypeptide is Mediator of RNA polymerase II transcription subunit 9 (med9) (Xenopus laevis (African clawed frog)).